Consider the following 262-residue polypeptide: uncharacterized protein (262 aa).

This is an uncharacterized protein from Bacillus subtilis (strain 168).